A 141-amino-acid chain; its full sequence is Putative nickel-responsive regulator (141 aa).

Ni(2+) is bound by residues His80, His91, His93, and Cys99.

It belongs to the transcriptional regulatory CopG/NikR family. The cofactor is Ni(2+).

Functionally, transcriptional regulator. This Methanococcus maripaludis (strain C5 / ATCC BAA-1333) protein is Putative nickel-responsive regulator.